The primary structure comprises 442 residues: Vacuolar zinc transporter ZRC1 (442 aa).

At 1-8 (MITGKELR) the chain is on the cytoplasmic side. The helical transmembrane segment at 9–29 (IISLLTLDTVFFLLEITIGYM) threads the bilayer. Residues 30 to 32 (SHS) are Vacuolar-facing. The chain crosses the membrane as a helical span at residues 33-53 (LALIADSFHMLNDIISLLVAL). At 54 to 75 (WAVDVAKNRGPDAKYTYGWKRA) the chain is on the cytoplasmic side. A helical transmembrane segment spans residues 76–96 (EILGALINAVFLIALCFSIMI). The Vacuolar portion of the chain corresponds to 97 to 112 (EALQRLIEPQEIQNPR). A helical membrane pass occupies residues 113–133 (LVLYVGVAGLISNVVGLFLFH). Residues 134-235 (DHGSDSLHSH…GHRSLNMHGV (102 aa)) are Cytoplasmic-facing. 3 short sequence motifs (histidine repeat) span residues 141–145 (HSHSH), 163–167 (HSHSH), and 216–220 (HDHSH). Disordered regions lie at residues 141–170 (HSHS…HASL) and 208–227 (QPLL…KPGH). Residues 149 to 170 (ESGNNDLDIESNATHSHSHASL) are compositionally biased toward polar residues. The span at 212–224 (NHDDHDHSHESKK) shows a compositional bias: basic and acidic residues. The helical transmembrane segment at 236 to 256 (FLHVLGDALGNIGVIAAALFI) threads the bilayer. Residues 257–265 (WKTEYSWRY) are Vacuolar-facing. Residues 266 to 286 (YSDPIVSLIITIIIFSSALPL) traverse the membrane as a helical segment. Residues 287–442 (SRRASRILLQ…AVNCNTSNCL (156 aa)) are Cytoplasmic-facing. A Glycyl lysine isopeptide (Lys-Gly) (interchain with G-Cter in ubiquitin) cross-link involves residue K357. 3 positions are modified to phosphoserine: S387, S393, and S397. Residues 391–419 (GGSPSSSQEAFDSHGNTEHGRKKRSPTAY) form a disordered region.

Belongs to the cation diffusion facilitator (CDF) transporter (TC 2.A.4) family. SLC30A subfamily.

Its subcellular location is the vacuole membrane. The enzyme catalyses Zn(2+)(in) = Zn(2+)(out). Functionally, vacuolar transporter that regulates zinc homeostasis by mediating zinc transport and storage into the vacuole. ZRC1 senses zinc availability in the cytosol, which might be performed through the histidine repeat motifs, and transports zinc from the cytosol to the vacuole if zinc in cytosol is abundant, conferring resistance to zinc toxicity. Plays a role in resistance to zinc shock resulting from sudden influx of zinc into cytoplasm when ZRT1 and ZRT2 are induced in response to zinc depletion. The sequence is that of Vacuolar zinc transporter ZRC1 from Saccharomyces cerevisiae (strain ATCC 204508 / S288c) (Baker's yeast).